The primary structure comprises 249 residues: Serine 3-dehydrogenase (249 aa).

6–30 provides a ligand contact to NADP(+); the sequence is LITGATSGFGQATAQRFVKEGWKVI. Ser135 lines the substrate pocket. Tyr148 functions as the Proton acceptor in the catalytic mechanism.

This sequence belongs to the short-chain dehydrogenases/reductases (SDR) family. In terms of assembly, homotetramer.

It catalyses the reaction L-serine + NADP(+) = aminoacetaldehyde + CO2 + NADPH. Its function is as follows. Catalyzes the oxidation of the hydroxyl group of serine to form 2-aminomalonate semialdehyde which is spontaneously converted into 2-aminoacetaldehyde and CO(2). Also acts on D-serine, L-glycerate, D-glycerate and 2-methyl-DL-serine. Does not act on O-methyl-DL-serine and L-threonine. This Rhizobium radiobacter (Agrobacterium tumefaciens) protein is Serine 3-dehydrogenase (sdh).